Consider the following 316-residue polypeptide: Protein FLUORESCENT IN BLUE LIGHT, chloroplastic (316 aa).

The transit peptide at 1 to 26 (MAALIRCCSSFSHTSGGQPPPRDKSR) directs the protein to the chloroplast. Residues 125-145 (MFSMPILLLVALIGATVGGLL) form a helical membrane-spanning segment. Positions 144 to 175 (LLARQRKGELQRLNEQLRQINAALRRQAKIES) form a coiled coil. TPR repeat units lie at residues 203-236 (LISK…AQSL), 243-276 (KKAA…SKRE), and 283-316 (TEAY…LETD).

As to quaternary structure, part of the FLU-containing chloroplast membrane complex composed of FLU, CRD1, PORB, PORC, CHLP and HEMA1. Interacts with HEMA1 (via C-terminus) only in the absence of light. No interaction with HEMA2.

It is found in the plastid. The protein resides in the chloroplast membrane. The protein localises to the chloroplast thylakoid membrane. In terms of biological role, negative regulator of tetrapyrrole biosynthesis (including chlorophyll) in chloroplasts, probably via HEMA1 repression. Inhibits especially the magnesium ion Mg(2+) branch of tetrapyrrole biosynthesis, but independently of heme. The sequence is that of Protein FLUORESCENT IN BLUE LIGHT, chloroplastic (FLU) from Arabidopsis thaliana (Mouse-ear cress).